The primary structure comprises 275 residues: 2,3,4,5-tetrahydropyridine-2,6-dicarboxylate N-succinyltransferase (275 aa).

Belongs to the transferase hexapeptide repeat family.

The protein resides in the cytoplasm. It carries out the reaction (S)-2,3,4,5-tetrahydrodipicolinate + succinyl-CoA + H2O = (S)-2-succinylamino-6-oxoheptanedioate + CoA. The protein operates within amino-acid biosynthesis; L-lysine biosynthesis via DAP pathway; LL-2,6-diaminopimelate from (S)-tetrahydrodipicolinate (succinylase route): step 1/3. This Burkholderia multivorans (strain ATCC 17616 / 249) protein is 2,3,4,5-tetrahydropyridine-2,6-dicarboxylate N-succinyltransferase.